The sequence spans 237 residues: Deoxyribose-phosphate aldolase (237 aa).

Asp94 functions as the Proton donor/acceptor in the catalytic mechanism. The Schiff-base intermediate with acetaldehyde role is filled by Lys158. Lys187 functions as the Proton donor/acceptor in the catalytic mechanism.

Belongs to the DeoC/FbaB aldolase family. DeoC type 1 subfamily.

The protein resides in the cytoplasm. It carries out the reaction 2-deoxy-D-ribose 5-phosphate = D-glyceraldehyde 3-phosphate + acetaldehyde. The protein operates within carbohydrate degradation; 2-deoxy-D-ribose 1-phosphate degradation; D-glyceraldehyde 3-phosphate and acetaldehyde from 2-deoxy-alpha-D-ribose 1-phosphate: step 2/2. In terms of biological role, catalyzes a reversible aldol reaction between acetaldehyde and D-glyceraldehyde 3-phosphate to generate 2-deoxy-D-ribose 5-phosphate. This Lactobacillus acidophilus (strain ATCC 700396 / NCK56 / N2 / NCFM) protein is Deoxyribose-phosphate aldolase.